The sequence spans 486 residues: Cytosol aminopeptidase (486 aa).

Zn(2+) contacts are provided by K249 and D254. K261 is an active-site residue. The Zn(2+) site is built by D272, D331, and E333. R335 is a catalytic residue.

It belongs to the peptidase M17 family. As to quaternary structure, homohexamer. The cofactor is Zn(2+).

The protein resides in the cytoplasm. It carries out the reaction Release of an N-terminal amino acid, Xaa-|-Yaa-, in which Xaa is preferably Leu, but may be other amino acids including Pro although not Arg or Lys, and Yaa may be Pro. Amino acid amides and methyl esters are also readily hydrolyzed, but rates on arylamides are exceedingly low.. The enzyme catalyses Release of N-terminal proline from a peptide.. Presumably involved in the processing and regular turnover of intracellular proteins. Catalyzes the removal of unsubstituted N-terminal amino acids from various peptides. This chain is Cytosol aminopeptidase, found in Encephalitozoon cuniculi (strain GB-M1) (Microsporidian parasite).